Consider the following 154-residue polypeptide: Aspartate carbamoyltransferase regulatory chain (154 aa).

4 residues coordinate Zn(2+): cysteine 111, cysteine 116, cysteine 139, and cysteine 142.

The protein belongs to the PyrI family. Contains catalytic and regulatory chains. Zn(2+) serves as cofactor.

In terms of biological role, involved in allosteric regulation of aspartate carbamoyltransferase. This chain is Aspartate carbamoyltransferase regulatory chain, found in Parabacteroides distasonis (strain ATCC 8503 / DSM 20701 / CIP 104284 / JCM 5825 / NCTC 11152).